The chain runs to 1715 residues: MRSSFLVSNPPFLPSLIPRYSSRKSIRRSRERFSFPESLRVSLLHGIRRNIEVAQGVQFDGPIMDRDVNLDDDLVVQVCVTRTLPPALTLELGLESLKEAIDELKTNPPKSSSGVLRFQVAVPPRAKALFWFCSQPTTSDVFPVFFLSKDTVEPSYKSLYVKEPHGVFGIGNAFAFVHSSSVDSNGHSMIKTFLSDESAMVTAYGFPDIEFNKYSTVNSKDGSSYFFVPQIELDEHEEVSILAVTLAWNESLSYTVEQTISSYEKSIFQVSSHFCPNVEDHWFKHLKSSLAKLSVEEIHPLEMEHMGFFTFSGRDQADVKELKSIQSSCQFHCKLSPDVVFSNNMLNRETEVSNFLRDEANINAVWASAIIEECTRLGLTYFCVAPGSRSSHLAIAAANHPLTTCLACFDERSLAFHAIGYAKGSLKPAVIITSSGTAVSNLLPAVVEASEDFLPLLLLTADRPPELQGVGANQAINQINHFGSFVRFFFNLPPPTDLIPVRMVLTTVDSALHWATGSACGPVHLNCPFRDPLDGSPTNWSSNCLNGLDMWMSNAEPFTKYFQVQSHKSDGVTTGQITEILQVIKEAKKGLLLIGAIHTEDEIWASLLLAKELMWPVVADVLSGVRLRKLFKPFVEKLTHVFVDHLDHALFSDSVRNLIEFDVVIQVGSRITSKRVSQMLEKCFPFAYILVDKHPCRHDPSHLVTHRVQSNIVQFANCVLKSRFPWRRSKLHGHLQALDGAIAREMSFQISAESSLTEPYVAHMLSKALTSKSALFIGNSMPIRDVDMYGCSSENSSHVVDMMLSAELPCQWIQVTGNRGASGIDGLLSSATGFAVGCKKRVVCVVGDISFLHDTNGLAILKQRIARKPMTILVINNRGGGIFRLLPIAKKTEPSVLNQYFYTAHDISIENLCLAHGVRYVHVGTKSELEDALFVPSVEEMDCIVEVESSINANAIVHSTLERFARQAAENSLGIVSASSFLHPMIKNVLLCQVSGIQYSQYRVKLCDRPTICSDEFSQFHREGFILSLTLEDGSIGYGEVAPLNSNVENLMDVEGQLQLVLHLMNEAKFSYMLPLLNGSISSWIWSELGITASSIFPSVRCGLEMALLNAMAVRHDSSLLGILHYQKEENGSAQPHSVQICALLDSEGTPLEVAYVARKLVQEGFSAIKLKVGRRVSSVQDALVMQEVRRAVGVQIELRADANCRWTFEEAREFGLLVNSCNLKYIEEPVQNKDDLIRFHEETGLPVALDETLDDFEECPLRMLTKYTHPGIVAVVIKPSVVGGFENAALIARWAQQHGKMAVISAAYESGLGLSAYILFASYLEMENVKASTEQKQGTPPSVAHGLGTYRWLSEDVMMNTLGIFRSPYSGFVEGFIADASRNLKDVKINNDVIVRTSKGIPVRRYELRVDVDGFSHFIRVHDVGENAEGSVALFLHGFLGTGEEWIPIMTGISGSARCISVDIPGHGRSRVQSHASETQTSPTFSMEMIAEALYKLIEQITPGKVTIVGYSMGARIALYMALRFSNKIEGAVVVSGSPGLKDPVARKIRSATDDSKARMMVDNGLYIFIENWYNGGLWKSLRNHPHFSKIAASRLLHGDVPSVAKLLSDLSSGRQPSLWEELEDCDTNISLVFGEKDVKYKQIATRMYREMSKSKKSVNNIIEIVEIPEAGHAVHLESPLRVILALRKFLTRVHNSSTETELSQKLLLALKEM.

A chloroplast-targeting transit peptide spans 1 to 19; sequence MRSSFLVSNPPFLPSLIPR. The interval 20-273 is inactive isochorismate synthase; sequence YSSRKSIRRS…EKSIFQVSSH (254 aa). Residues 363-933 are 2-succinyl-5-enolpyruvyl-6-hydroxy-3-cyclohexene-1-carboxylate synthase; the sequence is NAVWASAIIE…GTKSELEDAL (571 aa). The chain crosses the membrane as a helical span at residues 429 to 449; it reads AVIITSSGTAVSNLLPAVVEA. The interval 981-1364 is O-succinylbenzoate synthase; sequence FLHPMIKNVL…SEDVMMNTLG (384 aa). Residue K1170 is the Proton donor; for the o-succinylbenzoate synthase activity of the active site. Mg(2+)-binding residues include D1202, E1228, and D1251. The active-site Proton acceptor; for the o-succinylbenzoate synthase activity is the K1279. Positions 1418 to 1715 are 2-succinyl-6-hydroxy-2,4-cyclohexadiene-1-carboxylate synthase; the sequence is HFIRVHDVGE…QKLLLALKEM (298 aa). The AB hydrolase-1 domain occupies 1435–1540; sequence LFLHGFLGTG…EGAVVVSGSP (106 aa).

It in the N-terminal section; belongs to the isochorismate synthase family. The protein in the 2nd section; belongs to the TPP enzyme family. MenD subfamily. This sequence in the 3rd section; belongs to the mandelate racemase/muconate lactonizing enzyme family. MenC type 1 subfamily. In the C-terminal section; belongs to the AB hydrolase superfamily. MenH family. Mg(2+) serves as cofactor. The cofactor is Mn(2+). Thiamine diphosphate is required as a cofactor.

The protein localises to the plastid. It localises to the chloroplast membrane. It catalyses the reaction isochorismate + 2-oxoglutarate + H(+) = 5-enolpyruvoyl-6-hydroxy-2-succinyl-cyclohex-3-ene-1-carboxylate + CO2. The enzyme catalyses (1R,6R)-6-hydroxy-2-succinyl-cyclohexa-2,4-diene-1-carboxylate = 2-succinylbenzoate + H2O. It carries out the reaction 5-enolpyruvoyl-6-hydroxy-2-succinyl-cyclohex-3-ene-1-carboxylate = (1R,6R)-6-hydroxy-2-succinyl-cyclohexa-2,4-diene-1-carboxylate + pyruvate. Its function is as follows. Multifunctional enzyme required for phylloquinone (vitamin K1) biosynthesis. The polypeptide is Protein PHYLLO, chloroplastic (PHYLLO) (Arabidopsis thaliana (Mouse-ear cress)).